Here is a 1186-residue protein sequence, read N- to C-terminus: ATP-dependent helicase/deoxyribonuclease subunit B (1186 aa).

Belongs to the helicase family. AddB/RexB type 2 subfamily. As to quaternary structure, heterodimer of AddA and RexB. It depends on Mg(2+) as a cofactor.

The heterodimer acts as both an ATP-dependent DNA helicase and an ATP-dependent, dual-direction single-stranded exonuclease. Recognizes the chi site generating a DNA molecule suitable for the initiation of homologous recombination. This subunit has 5' -&gt; 3' nuclease activity but not helicase activity. This is ATP-dependent helicase/deoxyribonuclease subunit B from Latilactobacillus sakei subsp. sakei (strain 23K) (Lactobacillus sakei subsp. sakei).